Reading from the N-terminus, the 232-residue chain is GTP cyclohydrolase III (232 aa).

Belongs to the archaeal-type GTP cyclohydrolase family.

It carries out the reaction GTP + 3 H2O = 2-amino-5-formylamino-6-(5-phospho-D-ribosylamino)pyrimidin-4(3H)-one + 2 phosphate + 2 H(+). Its function is as follows. Catalyzes the formation of 2-amino-5-formylamino-6-ribofuranosylamino-4(3H)-pyrimidinone ribonucleotide monophosphate and inorganic phosphate from GTP. Also has an independent pyrophosphate phosphohydrolase activity. The chain is GTP cyclohydrolase III from Saccharolobus islandicus (strain Y.G.57.14 / Yellowstone #1) (Sulfolobus islandicus).